The chain runs to 78 residues: Small venom protein 2 (78 aa).

The first 19 residues, 1–19 (MKFIVLLGALLALLVAVSA), serve as a signal peptide directing secretion. The propeptide occupies 20-42 (DRIAREAPEMESVDEAVLTRQAR).

Expressed by the venom gland.

Its subcellular location is the secreted. In Pimpla hypochondriaca (Parasitoid wasp), this protein is Small venom protein 2.